A 494-amino-acid polypeptide reads, in one-letter code: MQKKYVVALDQGTTSSRAIVFDHDANIVSVSQREFTQLYPNPGWVEHDPMEIWASQSSVLVEVLARAGIHSDEVAAIGITNQRETTVIWEKATGKPIYNAIVWQCRRSSEICEQLKAQGLEEYVRENTGLLLDPYFSGTKIKWILDNVPNARAQAERGELLFGTIDTWLVWKLTEGKVHVTDPTNAARTMLFNIHSLTWDNKLLEALDIPLSLLPEVKPSCSVYGTTRIAGEGSEIQVAGMAGDQQAALFGQLCVEPGMAKNTYGTGCFLLMNTGTKAVRSNHGLLTTVAVGPKGEVNYALEGSVFMGGATIQWLRDELGLIRDASDTEYFASKVADTNGVYLVPAFVGLGAPYWDPNARGALFGLTRGANRNHIIRAALESIAYQSKDLLDAMTKDSGVSLKRLKVDGGAVANDFLMQFQADITDVEVLRPSVCETTALGAAFLAGLAVGFWESVIELEHKACIDKHFIPNIDAETRVRLYAGWQDAVARTRA.

ADP is bound at residue Thr13. ATP is bound by residues Thr13, Thr14, and Ser15. Thr13 contributes to the sn-glycerol 3-phosphate binding site. Arg17 provides a ligand contact to ADP. Positions 83, 84, 135, and 244 each coordinate sn-glycerol 3-phosphate. Arg83, Glu84, Tyr135, Asp244, and Gln245 together coordinate glycerol. Positions 266 and 309 each coordinate ADP. Residues Thr266, Gly309, Gln313, and Gly410 each coordinate ATP. 2 residues coordinate ADP: Gly410 and Asn414.

The protein belongs to the FGGY kinase family.

It catalyses the reaction glycerol + ATP = sn-glycerol 3-phosphate + ADP + H(+). It participates in polyol metabolism; glycerol degradation via glycerol kinase pathway; sn-glycerol 3-phosphate from glycerol: step 1/1. Inhibited by fructose 1,6-bisphosphate (FBP). Key enzyme in the regulation of glycerol uptake and metabolism. Catalyzes the phosphorylation of glycerol to yield sn-glycerol 3-phosphate. This is Glycerol kinase from Shewanella baltica (strain OS185).